The sequence spans 278 residues: uncharacterized protein (278 aa).

Positions 1–20 (MSPLIVGTLIIILLSGLATA) are cleaved as a signal peptide. The GPI-anchor amidated glycine moiety is linked to residue glycine 96. Positions 97-278 (TFLTSPTAKR…QLIMQTFNGS (182 aa)) are cleaved as a propeptide — removed in mature form.

It localises to the cell membrane. This is an uncharacterized protein from Schizosaccharomyces pombe (strain 972 / ATCC 24843) (Fission yeast).